Reading from the N-terminus, the 392-residue chain is Queuine tRNA-ribosyltransferase (392 aa).

Asp-93 serves as the catalytic Proton acceptor. Residues 93–97, Asp-147, Gln-189, and Gly-216 each bind substrate; that span reads DSGGY. The interval 247–253 is RNA binding; sequence GVGAPED. The Nucleophile role is filled by Asp-266. The tract at residues 271-275 is RNA binding; important for wobble base 34 recognition; it reads TRVAR. 4 residues coordinate Zn(2+): Cys-304, Cys-306, Cys-309, and His-335.

Belongs to the queuine tRNA-ribosyltransferase family. As to quaternary structure, homodimer. Within each dimer, one monomer is responsible for RNA recognition and catalysis, while the other monomer binds to the replacement base PreQ1. Zn(2+) is required as a cofactor.

The enzyme catalyses 7-aminomethyl-7-carbaguanine + guanosine(34) in tRNA = 7-aminomethyl-7-carbaguanosine(34) in tRNA + guanine. The protein operates within tRNA modification; tRNA-queuosine biosynthesis. Its function is as follows. Catalyzes the base-exchange of a guanine (G) residue with the queuine precursor 7-aminomethyl-7-deazaguanine (PreQ1) at position 34 (anticodon wobble position) in tRNAs with GU(N) anticodons (tRNA-Asp, -Asn, -His and -Tyr). Catalysis occurs through a double-displacement mechanism. The nucleophile active site attacks the C1' of nucleotide 34 to detach the guanine base from the RNA, forming a covalent enzyme-RNA intermediate. The proton acceptor active site deprotonates the incoming PreQ1, allowing a nucleophilic attack on the C1' of the ribose to form the product. After dissociation, two additional enzymatic reactions on the tRNA convert PreQ1 to queuine (Q), resulting in the hypermodified nucleoside queuosine (7-(((4,5-cis-dihydroxy-2-cyclopenten-1-yl)amino)methyl)-7-deazaguanosine). The chain is Queuine tRNA-ribosyltransferase from Dehalococcoides mccartyi (strain ATCC BAA-2100 / JCM 16839 / KCTC 5957 / BAV1).